A 99-amino-acid chain; its full sequence is Nucleoid-associated protein EbfC (99 aa).

Belongs to the YbaB/EbfC family. As to quaternary structure, homodimer.

The protein resides in the cytoplasm. Its subcellular location is the nucleoid. Functionally, binds to DNA and alters its conformation. May be involved in regulation of gene expression, nucleoid organization and DNA protection. The sequence is that of Nucleoid-associated protein EbfC from Borrelia duttonii (strain Ly).